Here is a 946-residue protein sequence, read N- to C-terminus: Inositol-trisphosphate 3-kinase B (946 aa).

Disordered stretches follow at residues 19 to 128 (EMKS…EEAK), 156 to 288 (AQSS…TRSC), 308 to 472 (ARVT…GIPS), 486 to 561 (KDLK…RKAC), and 580 to 638 (GALE…HTLD). Residues Ser-43, Ser-49, and Ser-71 each carry the phosphoserine modification. A compositionally biased stretch (low complexity) spans 83–105 (NSSSGSGSGSSGSSVSSPSWAGR). Phosphoserine is present on residues Ser-204 and Ser-269. Polar residues predominate over residues 396 to 411 (TTVSVQSAESSDSLSW). Residues 445 to 458 (GGSPTLGLLGGSPS) show a composition bias toward low complexity. Over residues 524–534 (TGVQSEGTWES) the composition is skewed to polar residues. Residues 599–612 (SSSSASSTGFSSSY) are compositionally biased toward low complexity. ATP contacts are provided by residues Ser-679, Lys-690, 730–732 (DDL), and Asp-743. 2 residues coordinate substrate: Lys-745 and Arg-766. Residues 768–776 (DMYQKMIEV) are calmodulin-binding. A substrate-binding site is contributed by 793-800 (KPRYMQWR). Positions 817 and 897 each coordinate ATP. Residue Lys-900 participates in substrate binding.

Belongs to the inositol phosphokinase (IPK) family. As to quaternary structure, interacts with DMTN.

It is found in the cytoplasm. It localises to the cytoskeleton. The protein localises to the endoplasmic reticulum. The catalysed reaction is 1D-myo-inositol 1,4,5-trisphosphate + ATP = 1D-myo-inositol 1,3,4,5-tetrakisphosphate + ADP + H(+). With respect to regulation, IP3K is activated by calcium and calmodulin. Form B is much more sensitive to calcium/calmodulin than form A. Its function is as follows. Catalyzes the phosphorylation of 1D-myo-inositol 1,4,5-trisphosphate (InsP3) into 1D-myo-inositol 1,3,4,5-tetrakisphosphate and participates to the regulation of calcium homeostasis. The protein is Inositol-trisphosphate 3-kinase B of Homo sapiens (Human).